A 396-amino-acid polypeptide reads, in one-letter code: Argininosuccinate synthase (396 aa).

6–14 contributes to the ATP binding site; it reads AYSGGLDTS. Y83 serves as a coordination point for L-citrulline. An ATP-binding site is contributed by G113. L-aspartate is bound by residues T115, N119, and D120. An L-citrulline-binding site is contributed by N119. L-citrulline is bound by residues R123, S171, S180, E256, and Y268.

This sequence belongs to the argininosuccinate synthase family. Type 1 subfamily. As to quaternary structure, homotetramer.

Its subcellular location is the cytoplasm. The enzyme catalyses L-citrulline + L-aspartate + ATP = 2-(N(omega)-L-arginino)succinate + AMP + diphosphate + H(+). The protein operates within amino-acid biosynthesis; L-arginine biosynthesis; L-arginine from L-ornithine and carbamoyl phosphate: step 2/3. In Hyperthermus butylicus (strain DSM 5456 / JCM 9403 / PLM1-5), this protein is Argininosuccinate synthase.